Here is an 886-residue protein sequence, read N- to C-terminus: DNA mismatch repair protein MutS (886 aa).

641 to 648 (GPNMAGKS) is a binding site for ATP.

It belongs to the DNA mismatch repair MutS family.

Its function is as follows. This protein is involved in the repair of mismatches in DNA. It is possible that it carries out the mismatch recognition step. This protein has a weak ATPase activity. The sequence is that of DNA mismatch repair protein MutS from Rickettsia felis (strain ATCC VR-1525 / URRWXCal2) (Rickettsia azadi).